The following is a 173-amino-acid chain: Small ribosomal subunit protein uS5 (173 aa).

The region spanning 17–80 (LREKMIAVNR…EEARRNMVKV (64 aa)) is the S5 DRBM domain.

It belongs to the universal ribosomal protein uS5 family. As to quaternary structure, part of the 30S ribosomal subunit. Contacts proteins S4 and S8.

With S4 and S12 plays an important role in translational accuracy. In terms of biological role, located at the back of the 30S subunit body where it stabilizes the conformation of the head with respect to the body. The sequence is that of Small ribosomal subunit protein uS5 from Acidovorax sp. (strain JS42).